The sequence spans 198 residues: A-type ATP synthase subunit E (198 aa).

It belongs to the V-ATPase E subunit family. Has multiple subunits with at least A(3), B(3), C, D, E, F, H, I and proteolipid K(x).

Its subcellular location is the cell membrane. Component of the A-type ATP synthase that produces ATP from ADP in the presence of a proton gradient across the membrane. The sequence is that of A-type ATP synthase subunit E from Pyrococcus horikoshii (strain ATCC 700860 / DSM 12428 / JCM 9974 / NBRC 100139 / OT-3).